Consider the following 221-residue polypeptide: Antigenic protein SchS34 (221 aa).

Residues Asn-27, Asn-69, Asn-141, and Asn-215 are each glycosylated (N-linked (GlcNAc...) asparagine).

As to expression, expressed in the mycelium (at protein level).

The protein resides in the secreted. It is found in the spore. Its subcellular location is the spore wall. It localises to the cytoplasm. This chain is Antigenic protein SchS34, found in Stachybotrys chartarum (Toxic black mold).